Consider the following 328-residue polypeptide: NADH-cytochrome b5 reductase-like protein (328 aa).

The 109-residue stretch at 76–184 (DKWLEFKLQD…KGPVEKFKYS (109 aa)) folds into the FAD-binding FR-type domain. Phosphothreonine is present on T201.

The protein belongs to the flavoprotein pyridine nucleotide cytochrome reductase family. FAD serves as cofactor.

The protein localises to the mitochondrion. It carries out the reaction 2 Fe(III)-[cytochrome b5] + NADH = 2 Fe(II)-[cytochrome b5] + NAD(+) + H(+). Functionally, desaturation and elongation of fatty acids. The chain is NADH-cytochrome b5 reductase-like protein (CBR2) from Arabidopsis thaliana (Mouse-ear cress).